The chain runs to 430 residues: Aspartate aminotransferase, mitochondrial (430 aa).

Residues 1–29 (MALLHSGRVLSGIAAAFHPGLAAAASARA) constitute a mitochondrion transit peptide. Position 48 is a phosphothreonine (Thr-48). Lys-59 is subject to N6-acetyllysine. Position 65 (Gly-65) interacts with substrate. Lys-73 carries the N6-acetyllysine; alternate modification. Residue Lys-73 is modified to N6-succinyllysine; alternate. Position 82 is an N6-acetyllysine (Lys-82). At Lys-90 the chain carries N6-acetyllysine; alternate. Residue Lys-90 is modified to N6-succinyllysine; alternate. Residue Tyr-96 is modified to 3'-nitrotyrosine; alternate. Tyr-96 is subject to Phosphotyrosine; alternate. N6-acetyllysine; alternate occurs at positions 107 and 122. Lys-107 and Lys-122 each carry N6-succinyllysine; alternate. Ser-143 bears the Phosphoserine mark. The residue at position 159 (Lys-159) is an N6-acetyllysine; alternate. At Lys-159 the chain carries N6-succinyllysine; alternate. Residue Trp-162 coordinates substrate. Residue Lys-185 is modified to N6-acetyllysine; alternate. Lys-185 bears the N6-succinyllysine; alternate mark. Asn-215 serves as a coordination point for substrate. Lys-227 is modified (N6-succinyllysine). Lys-234 carries the post-translational modification N6-acetyllysine. Residues Lys-279 and Lys-296 each carry the N6-acetyllysine; alternate modification. Lys-279 carries the N6-(pyridoxal phosphate)lysine; alternate modification. Lys-296 carries the N6-succinyllysine; alternate modification. Residue Lys-302 is modified to N6-acetyllysine. At Lys-309 the chain carries N6-acetyllysine; alternate. The residue at position 309 (Lys-309) is an N6-succinyllysine; alternate. The residue at position 313 (Arg-313) is an Asymmetric dimethylarginine. Thr-333 is modified (phosphothreonine). Position 338 is an N6-acetyllysine; alternate (Lys-338). Residue Lys-338 is modified to N6-succinyllysine; alternate. Lys-345 is subject to N6-acetyllysine. Position 363 is an N6-acetyllysine; alternate (Lys-363). The residue at position 363 (Lys-363) is an N6-succinyllysine; alternate. An N6-acetyllysine mark is found at Lys-364 and Lys-387. An N6-acetyllysine; alternate mark is found at Lys-396 and Lys-404. N6-succinyllysine; alternate is present on residues Lys-396 and Lys-404. Arg-407 contributes to the substrate binding site.

The protein belongs to the class-I pyridoxal-phosphate-dependent aminotransferase family. Homodimer. Pyridoxal 5'-phosphate serves as cofactor.

The protein resides in the mitochondrion matrix. The protein localises to the cell membrane. The enzyme catalyses L-aspartate + 2-oxoglutarate = oxaloacetate + L-glutamate. It catalyses the reaction L-kynurenine + 2-oxoglutarate = kynurenate + L-glutamate + H2O. Catalyzes the irreversible transamination of the L-tryptophan metabolite L-kynurenine to form kynurenic acid (KA). As a member of the malate-aspartate shuttle, it has a key role in the intracellular NAD(H) redox balance. Is important for metabolite exchange between mitochondria and cytosol, and for amino acid metabolism. Facilitates cellular uptake of long-chain free fatty acids. The sequence is that of Aspartate aminotransferase, mitochondrial (GOT2) from Macaca fascicularis (Crab-eating macaque).